A 122-amino-acid chain; its full sequence is Methylglyoxal synthase (122 aa).

Residues 1-122 (MRIALIAHDK…DLFIKHLKGK (122 aa)) enclose the MGS-like domain. Residues His8, Lys12, 34–37 (TGTT), and 54–55 (SG) contribute to the substrate site. The active-site Proton donor/acceptor is the Asp60. His87 contacts substrate.

The protein belongs to the methylglyoxal synthase family.

It carries out the reaction dihydroxyacetone phosphate = methylglyoxal + phosphate. Its function is as follows. Catalyzes the formation of methylglyoxal from dihydroxyacetone phosphate. This chain is Methylglyoxal synthase, found in Acholeplasma laidlawii (strain PG-8A).